The sequence spans 676 residues: Electrogenic aspartate/glutamate antiporter SLC25A12, mitochondrial (676 aa).

The residue at position 2 (Ala-2) is an N-acetylalanine. Residues 2–293 form a regulatory N-terminal domain region; the sequence is AVKVHTTKRG…TLADIERIAP (292 aa). Residues 2-328 are Mitochondrial intermembrane-facing; the sequence is AVKVHTTKRG…WLQIAESAYR (327 aa). Ca(2+)-binding residues include Asp-65, Thr-67, Asp-69, Leu-71, and Glu-76. EF-hand domains are found at residues 65 to 76, 86 to 121, 125 to 155, and 157 to 192; these read DQTKDGLISYQE, APDS…TIIH, PFNW…QFLQ, and LQLE…IRSH. Residues 294–309 are linker loop domain; the sequence is LAEGALPYNLAELQRQ. The interval 319–611 is carrier domain; sequence WLQIAESAYR…RWFYIDFGGL (293 aa). Solcar repeat units lie at residues 323–415, 423–507, and 515–603; these read AESA…VRDK, IPLP…CKLL, and VGGI…LQRW. A helical transmembrane segment spans residues 329-346; that stretch reads FTLGSVAGAVGATAVYPI. The Mitochondrial matrix segment spans residues 347 to 389; the sequence is DLVKTRMQNQRGTGSVVGELMYKNSFDCFKKVLRYEGFFGLYR. Residues 390 to 409 form a helical membrane-spanning segment; it reads GLIPQLIGVAPEKAIKLTVN. The Mitochondrial intermembrane portion of the chain corresponds to 410–432; the sequence is DFVRDKFTRRDGSIPLPAEILAG. The helical transmembrane segment at 433–446 threads the bilayer; that stretch reads GCAGGSQVIFTNPL. At 447–481 the chain is on the mitochondrial matrix side; sequence EIVKIRLQVAGEITTGPRVSALNVLQDLGLFGLYK. Residues 482-501 form a helical membrane-spanning segment; the sequence is GAKACFLRDIPFSAIYFPVY. Residues 502-520 are Mitochondrial intermembrane-facing; that stretch reads AHCKLLLADENGHVGGINL. Residues 521–538 form a helical membrane-spanning segment; it reads LTAGAMAGVPAASLVTPA. The Mitochondrial matrix portion of the chain corresponds to 539–577; that stretch reads DVIKTRLQVAARAGQTTYSGVIDCFRKILREEGPSAFWK. A helical transmembrane segment spans residues 578–597; the sequence is GTAARVFRSSPQFGVTLVTY. Residues 598–676 are Mitochondrial intermembrane-facing; it reads ELLQRWFYID…AQPKVAAAAQ (79 aa). Residues 612–674 form a C-terminal domain region; the sequence is KPSGSEPTPK…AAAQPKVAAA (63 aa).

It belongs to the mitochondrial carrier (TC 2.A.29) family. As to quaternary structure, homodimer (via N-terminus).

It is found in the mitochondrion inner membrane. It catalyses the reaction L-aspartate(in) + L-glutamate(out) + H(+)(out) = L-aspartate(out) + L-glutamate(in) + H(+)(in). The enzyme catalyses 3-sulfino-L-alanine(out) + L-glutamate(in) + H(+)(in) = 3-sulfino-L-alanine(in) + L-glutamate(out) + H(+)(out). It carries out the reaction 3-sulfino-L-alanine(out) + L-aspartate(in) = 3-sulfino-L-alanine(in) + L-aspartate(out). Its activity is regulated as follows. L-aspartate and 3-sulfino-L-alanine uptake are both inhibited by glisoxepide. Functionally, mitochondrial electrogenic aspartate/glutamate antiporter that favors efflux of aspartate and entry of glutamate and proton within the mitochondria as part of the malate-aspartate shuttle. Also mediates the uptake of L-cysteinesulfinate (3-sulfino-L-alanine) by mitochondria in exchange of L-glutamate and proton. Can also exchange L-cysteinesulfinate with aspartate in their anionic form without any proton translocation. Lacks transport activity towards L-glutamine or gamma-aminobutyric acid (GABA). The protein is Electrogenic aspartate/glutamate antiporter SLC25A12, mitochondrial of Rattus norvegicus (Rat).